A 1150-amino-acid chain; its full sequence is Fl(2)d-associated complex component (1150 aa).

Over residues 1 to 10 (MEKKAKESLR) the composition is skewed to basic and acidic residues. Disordered regions lie at residues 1-444 (MEKK…EEER), 477-710 (QGRE…PPPL), 833-914 (ASED…MDTN), and 1034-1053 (KEQG…AKIP). Over residues 11 to 20 (RYKKAARHSA) the composition is skewed to basic residues. Residues 21-44 (THSSSSDSTSDSDSGSSSYSSTDS) are compositionally biased toward low complexity. Gly residues predominate over residues 47 to 69 (GVGGVGVGVGVPGGAGGPGGSGS). The span at 72–97 (GHPHTHGHGHHPRSAERHHRKKKSSR) shows a compositional bias: basic residues. A compositionally biased stretch (low complexity) spans 98 to 107 (RGGSSSGDEP). Basic residues-rich tracts occupy residues 110 to 144 (SRRK…KKRA) and 162 to 175 (AKLK…RLRA). Residues 122–147 (KKLVAKRNHIKRKLKEARLKKRAAAA) are a coiled coil. Basic and acidic residues predominate over residues 176 to 199 (ASKEQRERDKLRVVQRDRERDHHR). Low complexity predominate over residues 202–215 (SSRSPPSSSTTTTT). Residues 269-347 (PSLERERERE…KLRRQEEEEG (79 aa)) are a coiled coil. Composition is skewed to basic and acidic residues over residues 270–414 (SLER…DEMR), 428–444 (YAPR…EEER), and 492–529 (PDER…PEWE). A compositionally biased stretch (gly residues) spans 537 to 558 (AGGGPGGPSGTPGRPGGFVGGP). Basic and acidic residues-rich tracts occupy residues 589 to 611 (ERER…DRPD) and 630 to 640 (WLEHDQREKPR). Positions 660–669 (PPAPSHPHPA) are enriched in pro residues. Over residues 693-702 (GHGDHGERPG) the composition is skewed to basic and acidic residues. Residues 851 to 861 (QSLNLNQSLSS) are compositionally biased toward low complexity. Acidic residues predominate over residues 879-889 (ELSEISDSDDD). Residues 890–903 (ILNKTDKVRPKNEL) are compositionally biased toward basic and acidic residues. Over residues 905–914 (TETEQEMDTN) the composition is skewed to acidic residues.

Belongs to the ZC3H13 family. In terms of assembly, component of the WMM complex, a N6-methyltransferase complex composed of a catalytic subcomplex, named MAC, and of an associated subcomplex, named MACOM. The MAC subcomplex is composed of Ime4/Mettl3 and Mettl14. The MACOM subcomplex is composed of fl(2)d, Flacc/Xio, Hakai, vir, and, in some cases of nito. In terms of tissue distribution, widely expressed during embryogenesis but shows enrichment in the neuroectoderm.

It localises to the nucleus. Its function is as follows. Associated component of the WMM complex, a complex that mediates N6-methyladenosine (m6A) methylation of mRNAs, a modification that plays a role in the efficiency of mRNA splicing and is required for sex determination. In the WMM complex, acts as a key regulator of m6A methylation by bridging fl(2)d to the RNA-binding component nito. Required for sex determination and dosage compensation via Sxl alternative splicing: m6A methylation acts as a key regulator of Sxl pre-mRNA and promotes female-specific alternative splicing of Sxl, which determines female physiognomy. This is Fl(2)d-associated complex component from Drosophila melanogaster (Fruit fly).